The primary structure comprises 396 residues: Obg-like ATPase 1 (396 aa).

An OBG-type G domain is found at 23–283 (LKIGIVGLPN…LSAEERQKYL (261 aa)). 32 to 37 (NVGKST) lines the ATP pocket. Positions 36 and 56 each coordinate Mg(2+). L231 is an ATP binding site. Positions 267–274 (LELKLQEL) match the Nuclear export signal motif. K294 carries the N6-acetyllysine modification. In terms of domain architecture, TGS spans 304-387 (QLEYFFTAGP…EDGDIIFFKF (84 aa)).

It belongs to the TRAFAC class OBG-HflX-like GTPase superfamily. OBG GTPase family. YchF/OLA1 subfamily. As to quaternary structure, monomer. The cofactor is Mg(2+).

The protein localises to the cytoplasm. It is found in the nucleus. The protein resides in the nucleolus. Functionally, hydrolyzes ATP, and can also hydrolyze GTP with lower efficiency. Has lower affinity for GTP. The protein is Obg-like ATPase 1 of Pongo abelii (Sumatran orangutan).